The chain runs to 322 residues: Crystallin J1A (322 aa).

Belongs to the ADP-ribosylglycohydrolase family. J1 crystallin subfamily. As to expression, expressed in the rhopalia. Present in both the large and small eyes.

This Tripedalia cystophora (Jellyfish) protein is Crystallin J1A.